We begin with the raw amino-acid sequence, 371 residues long: Geranylgeranyl pyrophosphate synthase paxG (371 aa).

Residues Lys89, Arg92, and His121 each coordinate isopentenyl diphosphate. The Mg(2+) site is built by Asp128 and Asp132. Arg137 is a binding site for dimethylallyl diphosphate. An isopentenyl diphosphate-binding site is contributed by Arg138. Dimethylallyl diphosphate contacts are provided by Lys215, Thr216, and Gln249. Asp252 is a binding site for Mg(2+). The dimethylallyl diphosphate site is built by Asn256, Lys266, and Lys276. The Peroxisomal targeting signal signature appears at 369-371 (GRV).

This sequence belongs to the FPP/GGPP synthase family. Mg(2+) serves as cofactor.

The protein localises to the peroxisome. The enzyme catalyses isopentenyl diphosphate + dimethylallyl diphosphate = (2E)-geranyl diphosphate + diphosphate. The catalysed reaction is isopentenyl diphosphate + (2E)-geranyl diphosphate = (2E,6E)-farnesyl diphosphate + diphosphate. It carries out the reaction isopentenyl diphosphate + (2E,6E)-farnesyl diphosphate = (2E,6E,10E)-geranylgeranyl diphosphate + diphosphate. It functions in the pathway secondary metabolite biosynthesis. Functionally, geranylgeranyl pyrophosphate synthase; part of the gene cluster that mediates the biosynthesis of paxilline, a mycotoxin that acts as an inhibitor of mammalian maxi-K channels. PaxG, the geranylgeranyl diphosphate (GGPP) synthase is proposed to catalyze the first step in paxilline biosynthesis. Condensation of indole-3-glycerol phosphate with GGPP by paxC then forms 3-geranylgeranylindole (3-GGI), followed by epoxidation and cyclization of this intermediate (by paxM and paxB) to form paspaline. Paspaline is subsequently converted to 13-desoxypaxilline by paxP, the latter being then converted to paxilline by paxQ. Finally paxilline can be mono- and di-prenylated by paxD. The polypeptide is Geranylgeranyl pyrophosphate synthase paxG (Penicillium paxilli).